The primary structure comprises 702 residues: MGDEDWEAEILKPHVSSYVPVFEKDKYSSGANGDTFNRTSASSDIGESSKKENTSTTGGFGRGKGFGNRGFLNNKFEEGDSSGFWKESNNDCEDNQTRSRGFSKRGGCQDGNDSEASGPFRRGGRGSFRGCRGGFGLGRPNSESDQDQGTQRGGGLFGSRKPAASDSGNGDTYQSRSGSGRGGYKGLNEEVVTGSGKNSWKSETEGGESSDSQGPKVTYIPPPPPEDEDSIFAHYQTGINFDKYDTILVEVSGHDAPPAILTFEEANLCQTLNNNIAKAGYTKLTPVQKYSIPIVLAGRDLMACAQTGSGKTAAFLLPILAHMMRDGITASRFKELQEPECIIVAPTRELINQIYLEARKFSFGTCVRAVVIYGGTQFGHSVRQIVQGCNILCATPGRLMDIIGKEKIGLKQVKYLVLDEADRMLDMGFGPEMKKLISCPGMPSKEQRQTLLFSATFPEEIQRLAGDFLKSSYLFVAVGQVGGACRDVQQTILQVGQYSKREKLVEILRNIGDERTMVFVETKKKADFIATFLCQEKISTTSIHGDREQREREQALGDFRCGKCPVLVATSVAARGLDIENVQHVINFDLPSTIDEYVHRIGRTGRCGNTGRAISFFDTDSDNHLAQPLVKVLSDAQQDVPAWLEEIAFSTYVPPSFSSSTRGGAVFASVDTRKNYQGKHTLNTAGISSSQAPNPVDDESWD.

A disordered region spans residues Phe22–Glu228. Residues Ser29–Gly46 show a composition bias toward polar residues. Composition is skewed to gly residues over residues Gly58 to Asn68 and Arg125 to Leu137. 2 stretches are compositionally biased toward polar residues: residues Asn141–Thr150 and Ser195–Pro215. 2 positions are modified to phosphoserine: Ser195 and Ser199. An interaction with RANBP9 region spans residues Lys201 to Ile220. Positions Leu261–Lys289 match the Q motif motif. The Helicase ATP-binding domain occupies Ile292–Phe475. Ala305–Thr312 is an ATP binding site. The short motif at Asp419–Asp422 is the DEAD box element. The Helicase C-terminal domain occupies Lys503–Ala648. Residues Thr681–Pro693 show a composition bias toward polar residues. A disordered region spans residues Thr681–Asp702. Ser700 is subject to Phosphoserine.

Belongs to the DEAD box helicase family. DDX4/VASA subfamily. Found in a mRNP complex, at least composed of TDRD1, TDRD6, TDRD7 and DDX4. Interacts with RANBP9. Interacts with RANBP10. Interacts with PIWIL2 and MAEL. Interacts with BMAL1 and CLOCK. Interacts with Tex19.1 and, probably, Tex19.2. Interacts with RBM46. As to expression, testis-specific.

It localises to the cytoplasm. The protein localises to the perinuclear region. It catalyses the reaction ATP + H2O = ADP + phosphate + H(+). Functionally, ATP-dependent RNA helicase required during spermatogenesis to repress transposable elements and preventing their mobilization, which is essential for the germline integrity. Acts via the piRNA metabolic process, which mediates the repression of transposable elements during meiosis by forming complexes composed of piRNAs and Piwi proteins and governs the methylation and subsequent repression of transposons. Involved in the secondary piRNAs metabolic process, the production of piRNAs in fetal male germ cells through a ping-pong amplification cycle. Required for PIWIL2 slicing-triggered piRNA biogenesis: helicase activity enables utilization of one of the slice cleavage fragments generated by PIWIL2 and processing these pre-piRNAs into piRNAs. This chain is ATP-dependent RNA helicase DDX4, found in Mus musculus (Mouse).